Here is a 274-residue protein sequence, read N- to C-terminus: Putative outer membrane protein CPn_1073/CP_0776/CPj1073/CpB1118 (274 aa).

The signal sequence occupies residues 1 to 21 (MRRYLFMVLALCLYRAAPLEA).

Its subcellular location is the cell outer membrane. The sequence is that of Putative outer membrane protein CPn_1073/CP_0776/CPj1073/CpB1118 from Chlamydia pneumoniae (Chlamydophila pneumoniae).